The primary structure comprises 191 residues: Sporulation-specific protein (191 aa).

Not essential for sporulation. This is Sporulation-specific protein (SPR6) from Saccharomyces cerevisiae (strain ATCC 204508 / S288c) (Baker's yeast).